The following is an 87-amino-acid chain: Putative sodium channel toxin Ts40 (87 aa).

A signal peptide spans 1-19 (MTALFYLLFLTSVIIETHQ). Intrachain disulfides connect Cys-41–Cys-63, Cys-47–Cys-68, and Cys-51–Cys-70.

The protein belongs to the long (4 C-C) scorpion toxin superfamily. Sodium channel inhibitor family. Expressed by the venom gland.

Its subcellular location is the secreted. In terms of biological role, putative sodium channel toxin. The polypeptide is Putative sodium channel toxin Ts40 (Tityus serrulatus (Brazilian scorpion)).